Reading from the N-terminus, the 127-residue chain is uncharacterized protein (127 aa).

Disordered regions lie at residues 1–22 and 53–106; these read MLPAGCWNDTSRDGPGFRKMKG and LVGK…PGPK. The segment covering 76–95 has biased composition (basic and acidic residues); that stretch reads PNGEAHAEQARRKISVEEKQ.

The protein localises to the mitochondrion. This is an uncharacterized protein from Arabidopsis thaliana (Mouse-ear cress).